An 867-amino-acid chain; its full sequence is uncharacterized protein (867 aa).

Positions 76–108 (CDFCRQKKIRCDMDQSPRPGNACINCRKHHLDC) form a DNA-binding region, zn(2)-C6 fungal-type. 2 disordered regions span residues 110–167 (FTRT…ITPV) and 217–257 (PQLA…NSNL). Composition is skewed to polar residues over residues 137 to 167 (SAKS…ITPV) and 248 to 257 (SISSYTNSNL).

It localises to the nucleus. This is an uncharacterized protein from Schizosaccharomyces pombe (strain 972 / ATCC 24843) (Fission yeast).